Reading from the N-terminus, the 156-residue chain is Protein-export protein SecB (156 aa).

The protein belongs to the SecB family. As to quaternary structure, homotetramer, a dimer of dimers. One homotetramer interacts with 1 SecA dimer.

The protein localises to the cytoplasm. Its function is as follows. One of the proteins required for the normal export of preproteins out of the cell cytoplasm. It is a molecular chaperone that binds to a subset of precursor proteins, maintaining them in a translocation-competent state. It also specifically binds to its receptor SecA. This Desulfotalea psychrophila (strain LSv54 / DSM 12343) protein is Protein-export protein SecB.